Here is a 334-residue protein sequence, read N- to C-terminus: Adenosine deaminase (334 aa).

Zn(2+)-binding residues include His-12 and His-14. Substrate is bound by residues His-14, Asp-16, and Gly-170. His-197 provides a ligand contact to Zn(2+). Glu-200 (proton donor) is an active-site residue. Asp-278 serves as a coordination point for Zn(2+). Substrate is bound at residue Asp-279.

It belongs to the metallo-dependent hydrolases superfamily. Adenosine and AMP deaminases family. Adenosine deaminase subfamily. Zn(2+) serves as cofactor.

It catalyses the reaction adenosine + H2O + H(+) = inosine + NH4(+). The catalysed reaction is 2'-deoxyadenosine + H2O + H(+) = 2'-deoxyinosine + NH4(+). Its function is as follows. Catalyzes the hydrolytic deamination of adenosine and 2-deoxyadenosine. The polypeptide is Adenosine deaminase (Yersinia pseudotuberculosis serotype IB (strain PB1/+)).